Reading from the N-terminus, the 320-residue chain is Prophage side tail fiber protein homolog StfQ (320 aa).

2 disordered regions span residues 147-213 and 241-270; these read SGRA…HKSS and TTSG…TAAS. 2 stretches are compositionally biased toward polar residues: residues 172–206 and 241–258; these read DLGT…NSAG and TTSG…SSDG. The span at 261–270 shows a compositional bias: low complexity; that stretch reads THSLSGTAAS.

Belongs to the tail fiber family.

The sequence is that of Prophage side tail fiber protein homolog StfQ (stfQ) from Escherichia coli (strain K12).